Here is a 359-residue protein sequence, read N- to C-terminus: Peroxisome assembly protein 12 (359 aa).

Topologically, residues 1–19 (MAEYGAHITTASVADDQPS) are peroxisomal matrix. A helical transmembrane segment spans residues 20 to 47 (IFEVVAQDSLMTAVRPALQHVVKVLAES). Residues 48–51 (NPAH) are Cytoplasmic-facing. A helical transmembrane segment spans residues 52–76 (YGFLWRWFDEIFTLLDFLLQQHYLS). The Peroxisomal matrix portion of the chain corresponds to 77–109 (RTSASFSEHFYGLKRIVAGSSPHLQRPASAGLP). A helical transmembrane segment spans residues 110–139 (KEHLWKSAMFLVLLPYLKVKLEKLASSLRE). Over 140–144 (EDEYS) the chain is Cytoplasmic. A helical transmembrane segment spans residues 145-183 (IHPPSSRWKRFYRAFLAAYPFVNMAWEGWFLTQQLRYIL). Residues 184–249 (GKAEHHSPLL…VGGVALSLST (66 aa)) are Peroxisomal matrix-facing. A helical transmembrane segment spans residues 250-277 (GLSVGVFFLQFLDWWYSSENQEAIKSLT). Topologically, residues 278 to 359 (ALPTPPPPVH…HLIKLYSPEN (82 aa)) are cytoplasmic. Zn(2+) contacts are provided by C304, C307, C325, and C328. The RING-type; degenerate zinc-finger motif lies at 304 to 343 (CPLCRKTRVNDTVLATSGYVFCYRCVFNYVRSHQACPITG).

This sequence belongs to the pex2/pex10/pex12 family. As to quaternary structure, component of the PEX2-PEX10-PEX12 retrotranslocation channel, composed of PEX2, PEX10 and PEX12. Interacts with PEX19 via its cytoplasmic domain.

Its subcellular location is the peroxisome membrane. It functions in the pathway protein modification; protein ubiquitination. In terms of biological role, component of a retrotranslocation channel required for peroxisome organization by mediating export of the PEX5 receptor from peroxisomes to the cytosol, thereby promoting PEX5 recycling. The retrotranslocation channel is composed of PEX2, PEX10 and PEX12; each subunit contributing transmembrane segments that coassemble into an open channel that specifically allows the passage of PEX5 through the peroxisomal membrane. PEX12 also regulates PEX5 recycling by activating the E3 ubiquitin-protein ligase activity of PEX10. When PEX5 recycling is compromised, PEX12 stimulates PEX10-mediated polyubiquitination of PEX5, leading to its subsequent degradation. The sequence is that of Peroxisome assembly protein 12 (Pex12) from Mus musculus (Mouse).